A 287-amino-acid chain; its full sequence is Polyamine aminopropyltransferase (287 aa).

The region spanning 5–238 (EIWYETLHAN…GIMTFAWASQ (234 aa)) is the PABS domain. Residue Q33 participates in S-methyl-5'-thioadenosine binding. H64 and D88 together coordinate spermidine. S-methyl-5'-thioadenosine contacts are provided by residues E108 and 140 to 141 (DG). D158 functions as the Proton acceptor in the catalytic mechanism. 158-161 (DCTD) is a spermidine binding site. Residue P165 coordinates S-methyl-5'-thioadenosine.

Belongs to the spermidine/spermine synthase family. In terms of assembly, homodimer or homotetramer.

The protein localises to the cytoplasm. It carries out the reaction S-adenosyl 3-(methylsulfanyl)propylamine + putrescine = S-methyl-5'-thioadenosine + spermidine + H(+). It functions in the pathway amine and polyamine biosynthesis; spermidine biosynthesis; spermidine from putrescine: step 1/1. In terms of biological role, catalyzes the irreversible transfer of a propylamine group from the amino donor S-adenosylmethioninamine (decarboxy-AdoMet) to putrescine (1,4-diaminobutane) to yield spermidine. This is Polyamine aminopropyltransferase from Serratia proteamaculans (strain 568).